A 44-amino-acid polypeptide reads, in one-letter code: Defensin heliomicin (44 aa).

Intrachain disulfides connect C7–C32, C18–C40, and C22–C42.

The protein resides in the secreted. Its function is as follows. This peptide has potent anti-fungal activity. Has no activity against Gram-negative and Gram-positive bacteria. This chain is Defensin heliomicin, found in Heliothis virescens (Tobacco budworm moth).